We begin with the raw amino-acid sequence, 374 residues long: UPF0754 membrane protein SAB1779c (374 aa).

Helical transmembrane passes span 4–24 and 354–374; these read LFII…TNVI and SLGF…AIFV.

Belongs to the UPF0754 family.

It is found in the cell membrane. In Staphylococcus aureus (strain bovine RF122 / ET3-1), this protein is UPF0754 membrane protein SAB1779c.